The sequence spans 337 residues: Probable dual-specificity RNA methyltransferase RlmN (337 aa).

E88 acts as the Proton acceptor in catalysis. Residues 94-322 form the Radical SAM core domain; sequence SSDRLTVCVS…ASIRRSRGLD (229 aa). The cysteines at positions 101 and 327 are disulfide-linked. [4Fe-4S] cluster contacts are provided by C108, C112, and C115. S-adenosyl-L-methionine-binding positions include 155–156, S185, 208–210, and N284; these read GE and SLH. The active-site S-methylcysteine intermediate is C327.

This sequence belongs to the radical SAM superfamily. RlmN family. Requires [4Fe-4S] cluster as cofactor.

It localises to the cytoplasm. It catalyses the reaction adenosine(2503) in 23S rRNA + 2 reduced [2Fe-2S]-[ferredoxin] + 2 S-adenosyl-L-methionine = 2-methyladenosine(2503) in 23S rRNA + 5'-deoxyadenosine + L-methionine + 2 oxidized [2Fe-2S]-[ferredoxin] + S-adenosyl-L-homocysteine. The catalysed reaction is adenosine(37) in tRNA + 2 reduced [2Fe-2S]-[ferredoxin] + 2 S-adenosyl-L-methionine = 2-methyladenosine(37) in tRNA + 5'-deoxyadenosine + L-methionine + 2 oxidized [2Fe-2S]-[ferredoxin] + S-adenosyl-L-homocysteine. In terms of biological role, specifically methylates position 2 of adenine 2503 in 23S rRNA and position 2 of adenine 37 in tRNAs. In Thermosynechococcus vestitus (strain NIES-2133 / IAM M-273 / BP-1), this protein is Probable dual-specificity RNA methyltransferase RlmN.